The sequence spans 927 residues: SPX and EXS domain-containing protein 5 (927 aa).

The SPX domain occupies 1–460; it reads MKFGKYLESQ…GLSIGSQVMS (460 aa). 4 disordered regions span residues 54–78, 204–239, 257–305, and 326–355; these read KINS…SSSN, KKNK…QHLQ, PIKS…DQDP, and SDNC…GGNN. Low complexity-rich tracts occupy residues 60 to 78 and 208 to 224; these read PSPT…SSSN and LNNN…NNNN. Positions 257-270 are enriched in polar residues; sequence PIKSTPLSPKQQDG. Residues 286-299 show a composition bias toward acidic residues; the sequence is LEEEEEEEEEEDDN. 8 consecutive transmembrane segments (helical) span residues 516 to 536, 553 to 573, 597 to 617, 636 to 656, 682 to 702, 769 to 789, 845 to 862, and 869 to 889; these read FFSG…YYFI, VYSA…DCWV, IFQA…VYMW, PLVL…IFQL, FFMG…AQFV, LSIV…DSGW, FVYY…TTWT, and QLTN…IEIL. The EXS domain maps to 717–927; sequence GCIRYARYFN…LPYQIRDNEN (211 aa).

This sequence belongs to the SYG1 (TC 2.A.94) family.

The protein localises to the membrane. The chain is SPX and EXS domain-containing protein 5 from Dictyostelium discoideum (Social amoeba).